Reading from the N-terminus, the 148-residue chain is Deoxyuridine 5'-triphosphate nucleotidohydrolase (148 aa).

Residues 67–69 (RSG), asparagine 80, 84–86 (LID), and methionine 94 each bind substrate.

This sequence belongs to the dUTPase family. The cofactor is Mg(2+).

The catalysed reaction is dUTP + H2O = dUMP + diphosphate + H(+). It participates in pyrimidine metabolism; dUMP biosynthesis; dUMP from dCTP (dUTP route): step 2/2. Its function is as follows. This enzyme is involved in nucleotide metabolism: it produces dUMP, the immediate precursor of thymidine nucleotides and it decreases the intracellular concentration of dUTP so that uracil cannot be incorporated into DNA. The protein is Deoxyuridine 5'-triphosphate nucleotidohydrolase of Francisella tularensis subsp. tularensis (strain FSC 198).